A 603-amino-acid chain; its full sequence is Phosphogluconate dehydratase (603 aa).

[4Fe-4S] cluster is bound by residues cysteine 154 and cysteine 221.

It belongs to the IlvD/Edd family. Requires [4Fe-4S] cluster as cofactor.

The catalysed reaction is 6-phospho-D-gluconate = 2-dehydro-3-deoxy-6-phospho-D-gluconate + H2O. Its pathway is carbohydrate metabolism; Entner-Doudoroff pathway. Its function is as follows. Catalyzes the dehydration of 6-phospho-D-gluconate to 2-dehydro-3-deoxy-6-phospho-D-gluconate. The protein is Phosphogluconate dehydratase of Escherichia coli O157:H7.